We begin with the raw amino-acid sequence, 382 residues long: V-type proton ATPase subunit C 1 (382 aa).

Thr2 bears the N-acetylthreonine mark.

The protein belongs to the V-ATPase C subunit family. V-ATPase is a heteromultimeric enzyme made up of two complexes: the ATP-hydrolytic V1 complex and the proton translocation V0 complex. The V1 complex consists of three catalytic AB heterodimers that form a heterohexamer, three peripheral stalks each consisting of EG heterodimers, one central rotor including subunits D and F, and the regulatory subunits C and H. The proton translocation complex V0 consists of the proton transport subunit a, a ring of proteolipid subunits c9c'', rotary subunit d, subunits e and f, and the accessory subunits ATP6AP1/Ac45 and ATP6AP2/PRR. As to expression, ubiquitous. Abundant in brain, liver, kidney and testis.

Its subcellular location is the cytoplasmic vesicle. It is found in the secretory vesicle. The protein resides in the synaptic vesicle membrane. It localises to the clathrin-coated vesicle membrane. Functionally, subunit of the V1 complex of vacuolar(H+)-ATPase (V-ATPase), a multisubunit enzyme composed of a peripheral complex (V1) that hydrolyzes ATP and a membrane integral complex (V0) that translocates protons. V-ATPase is responsible for acidifying and maintaining the pH of intracellular compartments and in some cell types, is targeted to the plasma membrane, where it is responsible for acidifying the extracellular environment. Subunit C is necessary for the assembly of the catalytic sector of the enzyme and is likely to have a specific function in its catalytic activity. This is V-type proton ATPase subunit C 1 (Atp6v1c1) from Mus musculus (Mouse).